We begin with the raw amino-acid sequence, 415 residues long: Serine hydroxymethyltransferase (415 aa).

(6S)-5,6,7,8-tetrahydrofolate contacts are provided by residues Leu121 and 125 to 127 (GHL). Lys230 carries the N6-(pyridoxal phosphate)lysine modification.

Belongs to the SHMT family. Homodimer. The cofactor is pyridoxal 5'-phosphate.

It is found in the cytoplasm. The enzyme catalyses (6R)-5,10-methylene-5,6,7,8-tetrahydrofolate + glycine + H2O = (6S)-5,6,7,8-tetrahydrofolate + L-serine. It participates in one-carbon metabolism; tetrahydrofolate interconversion. It functions in the pathway amino-acid biosynthesis; glycine biosynthesis; glycine from L-serine: step 1/1. Catalyzes the reversible interconversion of serine and glycine with tetrahydrofolate (THF) serving as the one-carbon carrier. This reaction serves as the major source of one-carbon groups required for the biosynthesis of purines, thymidylate, methionine, and other important biomolecules. Also exhibits THF-independent aldolase activity toward beta-hydroxyamino acids, producing glycine and aldehydes, via a retro-aldol mechanism. The polypeptide is Serine hydroxymethyltransferase (Syntrophomonas wolfei subsp. wolfei (strain DSM 2245B / Goettingen)).